A 360-amino-acid polypeptide reads, in one-letter code: Phenylalanine--tRNA ligase alpha subunit (360 aa).

A Mg(2+)-binding site is contributed by E260.

This sequence belongs to the class-II aminoacyl-tRNA synthetase family. Phe-tRNA synthetase alpha subunit type 1 subfamily. Tetramer of two alpha and two beta subunits. Mg(2+) is required as a cofactor.

The protein resides in the cytoplasm. It catalyses the reaction tRNA(Phe) + L-phenylalanine + ATP = L-phenylalanyl-tRNA(Phe) + AMP + diphosphate + H(+). This Rhizobium etli (strain CIAT 652) protein is Phenylalanine--tRNA ligase alpha subunit.